The primary structure comprises 346 residues: Very-long-chain 3-oxoacyl-CoA reductase (346 aa).

A helical membrane pass occupies residues 26-46; it reads GASALLAAGSLFVVSRALVFV. Valine 71, aspartate 126, aspartate 134, asparagine 153, tyrosine 220, lysine 224, isoleucine 253, and serine 255 together coordinate NADP(+). Tyrosine 220 acts as the Proton donor in catalysis. The active-site Lowers pKa of active site Tyr is the lysine 224.

Belongs to the short-chain dehydrogenases/reductases (SDR) family.

Its subcellular location is the endoplasmic reticulum membrane. The enzyme catalyses a very-long-chain (3R)-3-hydroxyacyl-CoA + NADP(+) = a very-long-chain 3-oxoacyl-CoA + NADPH + H(+). It participates in lipid metabolism; fatty acid biosynthesis. In terms of biological role, component of the microsomal membrane bound fatty acid elongation system, which produces the 26-carbon very long-chain fatty acids (VLCFA) from palmitate. Catalyzes the reduction of the 3-ketoacyl-CoA intermediate that is formed in each cycle of fatty acid elongation. VLCFAs serve as precursors for ceramide and sphingolipids. The chain is Very-long-chain 3-oxoacyl-CoA reductase from Aspergillus niger (strain ATCC MYA-4892 / CBS 513.88 / FGSC A1513).